We begin with the raw amino-acid sequence, 538 residues long: MFS-type transporter tndD (538 aa).

The tract at residues 1–42 is disordered; the sequence is MSLSGSDSHLAVSPTLAEDMNSSDTSAGLAETPPADEEKRSI. N-linked (GlcNAc...) asparagine glycans are attached at residues N21 and N71. 11 helical membrane passes run 81 to 101, 115 to 135, 153 to 173, 203 to 223, 235 to 255, 309 to 329, 348 to 368, 394 to 414, 422 to 442, 444 to 464, and 485 to 505; these read VGIVSALTFITPLASSMFAPG, LLAGFVVSVYVLGFAIGPLIL, ICFTVFSIACALSTNLGMLIA, GGVIAIYALGPLLGPVIGPVA, WVFWVLAIVGGGCTLASFLFL, PIVAASSVYVGIVYGYQYLMF, GLTFLGTGVGSLLGLFVIGAV, LPPLVWGAFFIPAGLFMYGWS, IVPIIGTGLVGIGNIAVFMCI, SYLVDAFTIFAASALAANTVV, and LGWGNSLLGFIAVVCIPIPWA.

This sequence belongs to the major facilitator superfamily.

The protein localises to the membrane. Functionally, MFS-type transporter; part of the gene cluster that mediates the biosynthesis of talaronoid C, a fusicoccane diterpenoid with an unprecedented tricyclic 5/8/6 ring system. The chain is MFS-type transporter tndD from Aspergillus flavipes.